Reading from the N-terminus, the 238-residue chain is Doublecortin domain-containing protein (238 aa).

Residues 82 to 112 are partial p25alpha domain; it reads VFERLNDKQFYTGVQKTKFMELLKNNKNKSS. The 82-residue stretch at 151-232 folds into the Doublecortin domain; it reads KTIFLFNNEK…GDPPAPIRNL (82 aa).

Interacts with alpha-tubulin 1 and beta-tubulin; the interaction stabilizes microtubule assembly.

It localises to the cytoplasm. It is found in the cytoskeleton. Involved in the stabilization of microtubules. Probably by controlling microtubules stabilization, plays a role in invasion, microneme secretion and parasite growth in host erythrocytes. This Plasmodium falciparum (isolate 3D7) protein is Doublecortin domain-containing protein.